Reading from the N-terminus, the 360-residue chain is Photosystem II protein D1 3 (360 aa).

The next 3 helical transmembrane spans lie at Y29 to V46, H118 to L133, and W142 to A156. H118 serves as a coordination point for chlorophyll a. Y126 is a binding site for pheophytin a. [CaMn4O5] cluster-binding residues include D170 and E189. A helical membrane pass occupies residues F197–L218. H198 serves as a coordination point for chlorophyll a. A quinone contacts are provided by residues H215 and S264–F265. H215 serves as a coordination point for Fe cation. H272 is a binding site for Fe cation. The helical transmembrane segment at F274–L288 threads the bilayer. The [CaMn4O5] cluster site is built by H332, E333, D342, and A344. The propeptide occupies A345–G360.

Belongs to the reaction center PufL/M/PsbA/D family. PSII is composed of 1 copy each of membrane proteins PsbA, PsbB, PsbC, PsbD, PsbE, PsbF, PsbH, PsbI, PsbJ, PsbK, PsbL, PsbM, PsbT, PsbX, PsbY, PsbZ, Psb30/Ycf12, peripheral proteins PsbO, CyanoQ (PsbQ), PsbU, PsbV and a large number of cofactors. It forms dimeric complexes. Requires The D1/D2 heterodimer binds P680, chlorophylls that are the primary electron donor of PSII, and subsequent electron acceptors. It shares a non-heme iron and each subunit binds pheophytin, quinone, additional chlorophylls, carotenoids and lipids. D1 provides most of the ligands for the Mn4-Ca-O5 cluster of the oxygen-evolving complex (OEC). There is also a Cl(-1) ion associated with D1 and D2, which is required for oxygen evolution. The PSII complex binds additional chlorophylls, carotenoids and specific lipids. as cofactor. In terms of processing, tyr-161 forms a radical intermediate that is referred to as redox-active TyrZ, YZ or Y-Z. Post-translationally, C-terminally processed by CtpA; processing is essential to allow assembly of the oxygen-evolving complex and thus photosynthetic growth.

Its subcellular location is the cellular thylakoid membrane. It catalyses the reaction 2 a plastoquinone + 4 hnu + 2 H2O = 2 a plastoquinol + O2. Functionally, photosystem II (PSII) is a light-driven water:plastoquinone oxidoreductase that uses light energy to abstract electrons from H(2)O, generating O(2) and a proton gradient subsequently used for ATP formation. It consists of a core antenna complex that captures photons, and an electron transfer chain that converts photonic excitation into a charge separation. The D1/D2 (PsbA/PsbD) reaction center heterodimer binds P680, the primary electron donor of PSII as well as several subsequent electron acceptors. The sequence is that of Photosystem II protein D1 3 from Trichormus variabilis (strain ATCC 29413 / PCC 7937) (Anabaena variabilis).